Consider the following 77-residue polypeptide: Large ribosomal subunit protein eL20 (77 aa).

Belongs to the eukaryotic ribosomal protein eL20 family. In terms of assembly, part of the 50S ribosomal subunit. Binds 23S rRNA.

This Pyrococcus abyssi (strain GE5 / Orsay) protein is Large ribosomal subunit protein eL20.